The sequence spans 342 residues: Signaling lymphocytic activation molecule (342 aa).

The signal sequence occupies residues 1 to 26 (MDSRGFLSLRCLLVLALASKLSCGTG). The Extracellular segment spans residues 27-237 (ESLMNCPEVP…CRPESSVPRQ (211 aa)). An Ig-like V-type domain is found at 29–138 (LMNCPEVPGK…QHFCLQLKLY (110 aa)). N-linked (GlcNAc...) asparagine glycosylation is found at N57, N102, N125, N150, N157, N189, and N217. In terms of domain architecture, Ig-like C2-type spans 144–223 (PEIKVLNWTQ…PVSNRSWSFN (80 aa)). Cystine bridges form between C158/C228 and C164/C209. The helical transmembrane segment at 238–261 (WRLYAGLFLGGIVGVILIFEVVLL) threads the bilayer. The Cytoplasmic portion of the chain corresponds to 262–342 (LLRRRGKTNH…VYASVTFPES (81 aa)). Residues 282–287 (TIYAQV) carry the ITSM 1 motif. 3 positions are modified to phosphotyrosine; by FYN: Y284, Y310, and Y334. Residues 310-315 (YVAATE) carry the SH2-binding motif. An ITSM 2 motif is present at residues 332-337 (TVYASV).

As to quaternary structure, interacts (via cytoplasmic domain) with SH2D1A and SH2D1B; SH2D1A mediates association with FYN. Interacts (via cytoplasmic domain phosphorylated on tyrosine residues) with INPP5D and PTPN11; presence of SH2D1A facilitates binding to INPP5D. Interacts with MAP4K1. Interacts with PIK3C3, BECN1 and UVRAG; indicative for an association with PI3K complex II (PI3KC3-C2). Interacts with canine distemper virus HN protein; suggesting that it may serve as a receptor. Post-translationally, phosphorylated on tyrosine residues by FYN.

The protein resides in the cell membrane. Its function is as follows. Self-ligand receptor of the signaling lymphocytic activation molecule (SLAM) family. SLAM receptors triggered by homo- or heterotypic cell-cell interactions are modulating the activation and differentiation of a wide variety of immune cells and thus are involved in the regulation and interconnection of both innate and adaptive immune response. Activities are controlled by presence or absence of small cytoplasmic adapter proteins, SH2D1A/SAP and/or SH2D1B/EAT-2. SLAMF1-induced signal-transduction events in T-lymphocytes are different from those in B-cells. Two modes of SLAMF1 signaling seem to exist: one depending on SH2D1A (and perhaps SH2D1B) and another in which protein-tyrosine phosphatase 2C (PTPN11)-dependent signal transduction operates. Initially it has been proposed that association with SH2D1A prevents binding to inhibitory effectors including INPP5D/SHIP1 and PTPN11/SHP-2. However, signaling is also regulated by SH2D1A which can simultaneously interact with and recruit FYN which subsequently phosphorylates and activates SLAMF1. Mediates IL-2-independent proliferation of activated T cells during immune responses and induces IFN-gamma production. Downstreaming signaling involves INPP5D/SHIP1, DOK1 and DOK2 leading to inhibited IFN-gamma production in T-cells, and PRKCQ, BCL10 and NFKB1 leading to increased T-cell activation and Th2 cytokine production. Promotes T-cell receptor-induced IL-4 secretion by CD4(+) cells. Inhibits antigen receptor-mediated production of IFN-gamma, but not IL-2, in CD4(-)/CD8(-) T-cells. Required for IL-4 production by germinal centers T follicular helper (T(Fh))cells. May inhibit CD40-induced signal transduction in monocyte-derived dendritic cells. May play a role in allergic responses and may regulate allergen-induced Th2 cytokine and Th1 cytokine secretion. In conjunction with SLAMF6 controls the transition between positive selection and the subsequent expansion and differentiation of the thymocytic natural killer T (NKT) cell lineage. Involved in the peripheral differentiation of indifferent natural killer T (iNKT) cells toward a regulatory NKT2 type. In macrophages involved in down-regulation of IL-12, TNF-alpha and nitric oxide in response to lipopolysaccharide (LPS). In B-cells activates the ERK signaling pathway independently of SH2D1A but implicating both, SYK and INPP5D, and activates Akt signaling dependent on SYK and SH2D1A. In conjunction with SLAMF5 and SLAMF6 may be a negative regulator of the humoral immune response. This chain is Signaling lymphocytic activation molecule (SLAMF1), found in Canis lupus familiaris (Dog).